A 198-amino-acid polypeptide reads, in one-letter code: Ribonuclease HII (198 aa).

An RNase H type-2 domain is found at 10-198; the sequence is HLVAGVDEVG…PVKRALGLVC (189 aa). A divalent metal cation contacts are provided by aspartate 16, glutamate 17, and aspartate 108.

The protein belongs to the RNase HII family. Requires Mn(2+) as cofactor. It depends on Mg(2+) as a cofactor.

The protein resides in the cytoplasm. It carries out the reaction Endonucleolytic cleavage to 5'-phosphomonoester.. Its function is as follows. Endonuclease that specifically degrades the RNA of RNA-DNA hybrids. This chain is Ribonuclease HII, found in Enterobacter sp. (strain 638).